The following is a 209-amino-acid chain: Octanoyltransferase (209 aa).

One can recognise a BPL/LPL catalytic domain in the interval 28–203 (NATPETLLLL…RFQGLLDEWL (176 aa)). Substrate is bound by residues 66–73 (RGGDVTFH), 133–135 (AIG), and 146–148 (GFA). Catalysis depends on Cys164, which acts as the Acyl-thioester intermediate.

Belongs to the LipB family.

It is found in the cytoplasm. It catalyses the reaction octanoyl-[ACP] + L-lysyl-[protein] = N(6)-octanoyl-L-lysyl-[protein] + holo-[ACP] + H(+). Its pathway is protein modification; protein lipoylation via endogenous pathway; protein N(6)-(lipoyl)lysine from octanoyl-[acyl-carrier-protein]: step 1/2. Its function is as follows. Catalyzes the transfer of endogenously produced octanoic acid from octanoyl-acyl-carrier-protein onto the lipoyl domains of lipoate-dependent enzymes. Lipoyl-ACP can also act as a substrate although octanoyl-ACP is likely to be the physiological substrate. This chain is Octanoyltransferase, found in Pelobacter propionicus (strain DSM 2379 / NBRC 103807 / OttBd1).